The sequence spans 100 residues: MSRRCQITGKGVLTGNNVSHANNKSRRRFLPNLQETTLISDILGASVRMRLSTDGIRTVEHNGGLDSFLLGTPNRKLPTEAQVIKRRILRVQERKAAQTA.

The protein belongs to the bacterial ribosomal protein bL28 family.

The sequence is that of Large ribosomal subunit protein bL28 from Gluconobacter oxydans (strain 621H) (Gluconobacter suboxydans).